A 203-amino-acid chain; its full sequence is UPF0637 protein SERP0693 (203 aa).

This sequence belongs to the UPF0637 family.

The polypeptide is UPF0637 protein SERP0693 (Staphylococcus epidermidis (strain ATCC 35984 / DSM 28319 / BCRC 17069 / CCUG 31568 / BM 3577 / RP62A)).